We begin with the raw amino-acid sequence, 400 residues long: Subtilisin-like protease 7 (400 aa).

Positions 1–20 (MGFITKAIPLALAAASVING) are cleaved as a signal peptide. The propeptide occupies 21 to 119 (AEILETRAGV…IERDARVQIN (99 aa)). In terms of domain architecture, Inhibitor I9 spans 36–118 (KYIVVMNDGM…YIERDARVQI (83 aa)). One can recognise a Peptidase S8 domain in the interval 129–400 (SWGLARVGSK…GKLINNGSGK (272 aa)). Active-site charge relay system residues include Asp161 and His192. N-linked (GlcNAc...) asparagine glycosylation occurs at Asn252. Ser346 serves as the catalytic Charge relay system. Asn396 is a glycosylation site (N-linked (GlcNAc...) asparagine).

This sequence belongs to the peptidase S8 family.

It localises to the secreted. In terms of biological role, secreted subtilisin-like serine protease with keratinolytic activity that contributes to pathogenicity. In Arthroderma gypseum (strain ATCC MYA-4604 / CBS 118893) (Microsporum gypseum), this protein is Subtilisin-like protease 7 (SUB7).